The sequence spans 521 residues: Glucose-6-phosphate isomerase (521 aa).

E351 serves as the catalytic Proton donor. Active-site residues include H382 and K491.

Belongs to the GPI family.

It localises to the cytoplasm. The enzyme catalyses alpha-D-glucose 6-phosphate = beta-D-fructose 6-phosphate. The protein operates within carbohydrate biosynthesis; gluconeogenesis. It functions in the pathway carbohydrate degradation; glycolysis; D-glyceraldehyde 3-phosphate and glycerone phosphate from D-glucose: step 2/4. Its function is as follows. Catalyzes the reversible isomerization of glucose-6-phosphate to fructose-6-phosphate. This Polaromonas naphthalenivorans (strain CJ2) protein is Glucose-6-phosphate isomerase.